Here is a 62-residue protein sequence, read N- to C-terminus: Large ribosomal subunit protein bL28 (62 aa).

The disordered stretch occupies residues 1 to 24; that stretch reads MGKQCFVTGRKASTGNNRSHALNS. A compositionally biased stretch (polar residues) spans 11–24; sequence KASTGNNRSHALNS.

This sequence belongs to the bacterial ribosomal protein bL28 family.

The polypeptide is Large ribosomal subunit protein bL28 (Staphylococcus saprophyticus subsp. saprophyticus (strain ATCC 15305 / DSM 20229 / NCIMB 8711 / NCTC 7292 / S-41)).